A 123-amino-acid chain; its full sequence is Small ribosomal subunit protein uS12cz/uS12cy (123 aa).

It belongs to the universal ribosomal protein uS12 family. Part of the 30S ribosomal subunit.

The protein resides in the plastid. It is found in the chloroplast. Its function is as follows. With S4 and S5 plays an important role in translational accuracy. Located at the interface of the 30S and 50S subunits. The polypeptide is Small ribosomal subunit protein uS12cz/uS12cy (rps12-A) (Cucumis sativus (Cucumber)).